Here is a 147-residue protein sequence, read N- to C-terminus: Peptide methionine sulfoxide reductase MsrB (147 aa).

Over residues 1 to 11 (MPKIVKKEPKF) the composition is skewed to basic and acidic residues. Residues 1 to 25 (MPKIVKKEPKFVEQSGKKVTKSDEQ) are disordered. A MsrB domain is found at 23 to 145 (DEQWREQLSD…NSVSLIFNKS (123 aa)). Zn(2+) contacts are provided by Cys62, Cys65, Cys111, and Cys114. Catalysis depends on Cys134, which acts as the Nucleophile.

It belongs to the MsrB Met sulfoxide reductase family. It depends on Zn(2+) as a cofactor.

It catalyses the reaction L-methionyl-[protein] + [thioredoxin]-disulfide + H2O = L-methionyl-(R)-S-oxide-[protein] + [thioredoxin]-dithiol. The polypeptide is Peptide methionine sulfoxide reductase MsrB (Vibrio parahaemolyticus serotype O3:K6 (strain RIMD 2210633)).